Consider the following 259-residue polypeptide: Small ribosomal subunit protein uS2 (259 aa).

The protein belongs to the universal ribosomal protein uS2 family.

This Fervidobacterium nodosum (strain ATCC 35602 / DSM 5306 / Rt17-B1) protein is Small ribosomal subunit protein uS2.